A 449-amino-acid polypeptide reads, in one-letter code: Ribulose bisphosphate carboxylase large chain (449 aa).

At lysine 7 the chain carries N6,N6,N6-trimethyllysine. Residues asparagine 116 and threonine 166 each coordinate substrate. The active-site Proton acceptor is the lysine 168. Substrate is bound at residue lysine 170. Mg(2+) is bound by residues lysine 194, aspartate 196, and glutamate 197. At lysine 194 the chain carries N6-carboxylysine. Histidine 287 serves as the catalytic Proton acceptor. Residues arginine 288, histidine 320, and serine 372 each coordinate substrate.

Belongs to the RuBisCO large chain family. Type I subfamily. Heterohexadecamer of 8 large chains and 8 small chains; disulfide-linked. The disulfide link is formed within the large subunit homodimers. Mg(2+) serves as cofactor. Post-translationally, the disulfide bond which can form in the large chain dimeric partners within the hexadecamer appears to be associated with oxidative stress and protein turnover.

It is found in the plastid. It localises to the chloroplast. It catalyses the reaction 2 (2R)-3-phosphoglycerate + 2 H(+) = D-ribulose 1,5-bisphosphate + CO2 + H2O. It carries out the reaction D-ribulose 1,5-bisphosphate + O2 = 2-phosphoglycolate + (2R)-3-phosphoglycerate + 2 H(+). Functionally, ruBisCO catalyzes two reactions: the carboxylation of D-ribulose 1,5-bisphosphate, the primary event in carbon dioxide fixation, as well as the oxidative fragmentation of the pentose substrate in the photorespiration process. Both reactions occur simultaneously and in competition at the same active site. The sequence is that of Ribulose bisphosphate carboxylase large chain from Liriope muscari (Big blue lilyturf).